Consider the following 414-residue polypeptide: 2,3-diketo-5-methylthiopentyl-1-phosphate enolase (414 aa).

The active-site Proton acceptor is the lysine 99. Substrate is bound by residues lysine 148, 174 to 177, histidine 265, glycine 338, and 360 to 361; these read KDDE and GG. Mg(2+)-binding residues include lysine 174, aspartate 176, and glutamate 177. Position 174 is an N6-carboxylysine (lysine 174).

The protein belongs to the RuBisCO large chain family. Type IV subfamily. Homodimer. Mg(2+) serves as cofactor.

The catalysed reaction is 5-methylsulfanyl-2,3-dioxopentyl phosphate = 2-hydroxy-5-methylsulfanyl-3-oxopent-1-enyl phosphate. The protein operates within amino-acid biosynthesis; L-methionine biosynthesis via salvage pathway; L-methionine from S-methyl-5-thio-alpha-D-ribose 1-phosphate: step 3/6. Its function is as follows. Catalyzes the enolization of 2,3-diketo-5-methylthiopentyl-1-phosphate (DK-MTP-1-P) into 2-hydroxy-3-keto-5-methylthiopentenyl-1-phosphate (HK-MTPenyl-1-P). This chain is 2,3-diketo-5-methylthiopentyl-1-phosphate enolase, found in Bacillus cytotoxicus (strain DSM 22905 / CIP 110041 / 391-98 / NVH 391-98).